The sequence spans 555 residues: Protein NRT1/ PTR FAMILY 5.4 (555 aa).

The next 2 helical transmembrane spans lie at 18 to 38 and 62 to 82; these read AALF…GLAS and WIGV…SILG. A Phosphothreonine modification is found at T86. 10 helical membrane passes run 87–107, 116–136, 159–179, 187–207, 311–331, 348–368, 392–412, 435–455, 470–490, and 516–536; these read VLLT…SVTV, VFFM…PCVM, NYWY…LIFI, LGFS…LIGI, IPIW…NTFF, IPPA…IPLY, IGVG…VEAK, LWLL…IVGM, IGAA…TGII, and YYYW…LFIA.

The protein belongs to the major facilitator superfamily. Proton-dependent oligopeptide transporter (POT/PTR) (TC 2.A.17) family. Expressed in roots and flowers.

It localises to the membrane. In Arabidopsis thaliana (Mouse-ear cress), this protein is Protein NRT1/ PTR FAMILY 5.4 (NPF5.4).